We begin with the raw amino-acid sequence, 157 residues long: Endoribonuclease YbeY (157 aa).

Zn(2+) is bound by residues His-114, His-118, and His-124.

It belongs to the endoribonuclease YbeY family. The cofactor is Zn(2+).

Its subcellular location is the cytoplasm. In terms of biological role, single strand-specific metallo-endoribonuclease involved in late-stage 70S ribosome quality control and in maturation of the 3' terminus of the 16S rRNA. This is Endoribonuclease YbeY from Salmonella dublin (strain CT_02021853).